The following is a 153-amino-acid chain: MTHDNKLQVEAIKCGTVIDHIPAQVGFKLLSLFKLTETEQRITIGLNLPSGEMGRKDLIKIENTFLTDEQVNQLALYAPQATVNRIDNYDVVGKSRPSLPERINNVLVCPNSNCISHAEPVSSCFAVKKRANDIALKCKYCEKEFSHNVVLAN.

Residues C109, C114, C138, and C141 each coordinate Zn(2+).

It belongs to the PyrI family. In terms of assembly, contains catalytic and regulatory chains. Zn(2+) serves as cofactor.

Its function is as follows. Involved in allosteric regulation of aspartate carbamoyltransferase. This is Aspartate carbamoyltransferase regulatory chain from Salmonella arizonae (strain ATCC BAA-731 / CDC346-86 / RSK2980).